The sequence spans 336 residues: Phosphate acyltransferase (336 aa).

It belongs to the PlsX family. Homodimer. Probably interacts with PlsY.

It localises to the cytoplasm. The catalysed reaction is a fatty acyl-[ACP] + phosphate = an acyl phosphate + holo-[ACP]. The protein operates within lipid metabolism; phospholipid metabolism. In terms of biological role, catalyzes the reversible formation of acyl-phosphate (acyl-PO(4)) from acyl-[acyl-carrier-protein] (acyl-ACP). This enzyme utilizes acyl-ACP as fatty acyl donor, but not acyl-CoA. In Pseudomonas putida (strain ATCC 700007 / DSM 6899 / JCM 31910 / BCRC 17059 / LMG 24140 / F1), this protein is Phosphate acyltransferase.